The chain runs to 424 residues: MASRARMERNYRGLSHIDYVHKKMWVVQAVCFGIAVLVFFGTLVAASINLTEGFPCFFAAVVDYRTVNTTLVHTGLTYPRLGGVVPVLFFQTKAVVFFFYATSIVFVFLVCYITVGAIISSKKHVGAAYMGSGAFVFSLMASPLTILLGTVSIWLLQAVVIVLAHKLIVLAAAVYLVHFSTITFFYGYFCGRGVDSKVYAEDISSAKDIDGSLHKLIGNVRAMMVNLLSIVYSIILIMSSLMFGMLLANSFTLKFWHVIVTVLITTSVLTLIYLLVIEFLIARYVHIILGAYIGLLIGYGMLWTTTCDYVNRFYYAMGANASNLRIACHSVLAVFTVLILLAMVVRLIRASLYHRRRSTRAYAKAMKLQQNVKHRLRQLRRSYKQRGSQSEDERALTQSRSAEASDEDTIYDRVYSGSESEWDD.

The Intravirion portion of the chain corresponds to 1–23 (MASRARMERNYRGLSHIDYVHKK). A helical membrane pass occupies residues 24 to 44 (MWVVQAVCFGIAVLVFFGTLV). At 45-94 (AASINLTEGFPCFFAAVVDYRTVNTTLVHTGLTYPRLGGVVPVLFFQTKA) the chain is on the virion surface side. The helical transmembrane segment at 95-115 (VVFFFYATSIVFVFLVCYITV) threads the bilayer. At 116 to 143 (GAIISSKKHVGAAYMGSGAFVFSLMASP) the chain is on the intravirion side. Residues 144-164 (LTILLGTVSIWLLQAVVIVLA) form a helical membrane-spanning segment. At 165 to 166 (HK) the chain is on the virion surface side. The chain crosses the membrane as a helical span at residues 167–187 (LIVLAAAVYLVHFSTITFFYG). Over 188 to 226 (YFCGRGVDSKVYAEDISSAKDIDGSLHKLIGNVRAMMVN) the chain is Intravirion. A helical transmembrane segment spans residues 227 to 247 (LLSIVYSIILIMSSLMFGMLL). Over 248 to 261 (ANSFTLKFWHVIVT) the chain is Virion surface. The helical transmembrane segment at 262 to 282 (VLITTSVLTLIYLLVIEFLIA) threads the bilayer. A topological domain (intravirion) is located at residue R283. A helical membrane pass occupies residues 284 to 304 (YVHIILGAYIGLLIGYGMLWT). At 305-327 (TTCDYVNRFYYAMGANASNLRIA) the chain is on the virion surface side. The helical transmembrane segment at 328–348 (CHSVLAVFTVLILLAMVVRLI) threads the bilayer. The Intravirion portion of the chain corresponds to 349-424 (RASLYHRRRS…YSGSESEWDD (76 aa)). The disordered stretch occupies residues 382 to 424 (SYKQRGSQSEDERALTQSRSAEASDEDTIYDRVYSGSESEWDD).

This sequence belongs to the herpesviridae glycoprotein M family. In terms of assembly, interacts (via N-terminus) with gN (via N-terminus). The gM-gN heterodimer forms the gCII complex.

Its subcellular location is the virion membrane. The protein localises to the host Golgi apparatus. The protein resides in the host trans-Golgi network. It is found in the host endosome membrane. It localises to the host nucleus inner membrane. Envelope glycoprotein important for virion assembly and egress. Plays a role in the correct incorporation of gH-gL into virion membrane. Directs the glycoprotein N (gN) to the host trans-Golgi network. This Gallid herpesvirus 2 (strain Chicken/Md5/ATCC VR-987) (GaHV-2) protein is Envelope glycoprotein M.